The sequence spans 327 residues: L-lactate dehydrogenase (327 aa).

NAD(+) contacts are provided by residues valine 18, aspartate 39, lysine 44, tyrosine 69, and 83 to 84 (GA). Residues glutamine 86, arginine 92, and 124–127 (NPVD) contribute to the substrate site. Residues 122-124 (AAN) and serine 147 contribute to the NAD(+) site. 152-155 (DSAR) provides a ligand contact to substrate. Arginine 157 and histidine 172 together coordinate beta-D-fructose 1,6-bisphosphate. Histidine 179 functions as the Proton acceptor in the catalytic mechanism. At tyrosine 224 the chain carries Phosphotyrosine. Threonine 233 provides a ligand contact to substrate.

Belongs to the LDH/MDH superfamily. LDH family. In terms of assembly, homotetramer.

It is found in the cytoplasm. It catalyses the reaction (S)-lactate + NAD(+) = pyruvate + NADH + H(+). Its pathway is fermentation; pyruvate fermentation to lactate; (S)-lactate from pyruvate: step 1/1. Allosterically activated by fructose 1,6-bisphosphate (FBP). Its function is as follows. Catalyzes the conversion of lactate to pyruvate. In Streptococcus equi subsp. zooepidemicus (strain H70), this protein is L-lactate dehydrogenase.